The primary structure comprises 269 residues: UPF0761 membrane protein HI_0276 (269 aa).

6 helical membrane passes run 32 to 52 (MLAM…FPVF), 89 to 109 (MSAV…NNID), 128 to 148 (FAIY…SIGI), 168 to 188 (LLSF…YTVV), 203 to 223 (FLAA…IVTF), and 232 to 252 (AMAT…VVLV).

This sequence belongs to the UPF0761 family.

It localises to the cell inner membrane. The polypeptide is UPF0761 membrane protein HI_0276 (Haemophilus influenzae (strain ATCC 51907 / DSM 11121 / KW20 / Rd)).